Here is a 328-residue protein sequence, read N- to C-terminus: Alanine racemase (328 aa).

The Proton acceptor; specific for D-alanine role is filled by K33. K33 is modified (N6-(pyridoxal phosphate)lysine). R118 is a substrate binding site. Residue Y237 is the Proton acceptor; specific for L-alanine of the active site. Residue M283 coordinates substrate.

Belongs to the alanine racemase family. Pyridoxal 5'-phosphate serves as cofactor.

The catalysed reaction is L-alanine = D-alanine. The protein operates within amino-acid biosynthesis; D-alanine biosynthesis; D-alanine from L-alanine: step 1/1. Catalyzes the interconversion of L-alanine and D-alanine. May also act on other amino acids. This Campylobacter jejuni subsp. jejuni serotype O:23/36 (strain 81-176) protein is Alanine racemase (alr).